Reading from the N-terminus, the 589-residue chain is UvrABC system protein C (589 aa).

In terms of domain architecture, GIY-YIG spans 13-90; the sequence is PNPGCYLFKN…IKTHTPKYNF (78 aa). A UVR domain is found at 194–229; that stretch reads KDILKKLHHLMQKASEKMFYEKAQEYRDIIDSIKQT.

This sequence belongs to the UvrC family. In terms of assembly, interacts with UvrB in an incision complex.

Its subcellular location is the cytoplasm. In terms of biological role, the UvrABC repair system catalyzes the recognition and processing of DNA lesions. UvrC both incises the 5' and 3' sides of the lesion. The N-terminal half is responsible for the 3' incision and the C-terminal half is responsible for the 5' incision. This Aster yellows witches'-broom phytoplasma (strain AYWB) protein is UvrABC system protein C.